The sequence spans 430 residues: N-lysine methyltransferase SMYD2-A (430 aa).

The SET domain maps to 5-239; the sequence is EGLERFDSPG…AGDEVFTSYI (235 aa). Position 15 to 17 (15 to 17) interacts with S-adenosyl-L-methionine; sequence KGR. Zn(2+) contacts are provided by Cys-50, Cys-53, Cys-63, Cys-66, Cys-72, Cys-76, His-84, and Cys-88. The segment at 50–88 adopts an MYND-type zinc-finger fold; it reads CDFCFARKEGLSKCGKCKQAFYCNVDCQKGDWPMHKLEC. S-adenosyl-L-methionine is bound by residues His-135, 204-205, and 256-258; these read NH and YFF.

It belongs to the class V-like SAM-binding methyltransferase superfamily.

It is found in the cytoplasm. It localises to the cytosol. Its subcellular location is the nucleus. The enzyme catalyses L-lysyl(4)-[histone H3] + 3 S-adenosyl-L-methionine = N(6),N(6),N(6)-trimethyl-L-lysyl(4)-[histone H3] + 3 S-adenosyl-L-homocysteine + 3 H(+). The catalysed reaction is L-lysyl-[protein] + S-adenosyl-L-methionine = N(6)-methyl-L-lysyl-[protein] + S-adenosyl-L-homocysteine + H(+). In terms of biological role, protein-lysine N-methyltransferase that methylates both histones and non-histone proteins, including p53/TP53 and RB1. Specifically trimethylates histone H3 'Lys-4' (H3K4me3) in vivo. The activity requires interaction with HSP90alpha. Shows even higher methyltransferase activity on p53/TP53. Monomethylates 'Lys-370' of p53/TP53, leading to decreased DNA-binding activity and subsequent transcriptional regulation activity of p53/TP53. Monomethylates RB1 at 'Lys-860'. In Xenopus laevis (African clawed frog), this protein is N-lysine methyltransferase SMYD2-A (smyd2-a).